We begin with the raw amino-acid sequence, 384 residues long: GDP/UDP-N,N'-diacetylbacillosamine 2-epimerase (hydrolyzing) (384 aa).

Belongs to the UDP-N-acetylglucosamine 2-epimerase family.

The enzyme catalyses GDP-N,N'-diacetylbacillosamine + H2O = 2,4-diacetamido-2,4,6-trideoxy-alpha-D-mannopyranose + GDP + H(+). The catalysed reaction is UDP-N,N'-diacetylbacillosamine + H2O = 2,4-diacetamido-2,4,6-trideoxy-alpha-D-mannopyranose + UDP + H(+). Its function is as follows. Involved in biosynthesis of legionaminic acid (5,7-diamino-3,5,7,9-tetradeoxy-D-glycero-D-galacto-non-2-ulosonic acid)(Leg), a sialic acid-like derivative that is incorporated into flagellin via O-linkage to Ser/Thr. Catalyzes the conversion of GDP-N,N'-diacetylbacillosamine (Bac2Ac4Ac) into 2,4-diacetamido-2,4,6-trideoxymannose and GDP. It can also use UDP-N,N'-diacetylbacillosamine however it generates small quantities of 2,4-diacetamido-2,4,6-trideoxymannose. The chain is GDP/UDP-N,N'-diacetylbacillosamine 2-epimerase (hydrolyzing) (legG) from Campylobacter jejuni subsp. jejuni serotype O:2 (strain ATCC 700819 / NCTC 11168).